We begin with the raw amino-acid sequence, 343 residues long: Multidrug resistance protein MdtN (343 aa).

The Cytoplasmic portion of the chain corresponds to 1–12 (MESTPKKAPRSK). Residues 13–33 (FPALLVVALALVALVFVIWRV) form a helical; Signal-anchor for type II membrane protein membrane-spanning segment. Topologically, residues 34 to 343 (DSAPSTNDAY…ASAVANLEPQ (310 aa)) are periplasmic.

The protein belongs to the membrane fusion protein (MFP) (TC 8.A.1) family. Could be part of a tripartite efflux system composed of MdtN, MdtO and MdtP.

The protein resides in the cell inner membrane. Could be involved in resistance to puromycin, acriflavine and tetraphenylarsonium chloride. This Shigella flexneri protein is Multidrug resistance protein MdtN (mdtN).